Here is a 194-residue protein sequence, read N- to C-terminus: Imidazoleglycerol-phosphate dehydratase (194 aa).

It belongs to the imidazoleglycerol-phosphate dehydratase family.

It is found in the cytoplasm. The catalysed reaction is D-erythro-1-(imidazol-4-yl)glycerol 3-phosphate = 3-(imidazol-4-yl)-2-oxopropyl phosphate + H2O. It participates in amino-acid biosynthesis; L-histidine biosynthesis; L-histidine from 5-phospho-alpha-D-ribose 1-diphosphate: step 6/9. The sequence is that of Imidazoleglycerol-phosphate dehydratase from Bacillus cereus (strain ATCC 14579 / DSM 31 / CCUG 7414 / JCM 2152 / NBRC 15305 / NCIMB 9373 / NCTC 2599 / NRRL B-3711).